We begin with the raw amino-acid sequence, 85 residues long: Large ribosomal subunit protein bL27 (85 aa).

The disordered stretch occupies residues 1–20 (MAHKKAAGSSRNGRDSNPKM).

Belongs to the bacterial ribosomal protein bL27 family.

The sequence is that of Large ribosomal subunit protein bL27 from Psychrobacter arcticus (strain DSM 17307 / VKM B-2377 / 273-4).